Reading from the N-terminus, the 492-residue chain is Transmembrane protease serine 2 (492 aa).

At 1-84 (MALNSGSPPA…TVCTSKTKKA (84 aa)) the chain is on the cytoplasmic side. Residues 85 to 105 (LCITLTLGTFLVGAALAAGLL) form a helical; Signal-anchor for type II membrane protein membrane-spanning segment. Residues 106–492 (WKFMGSKCSN…WIYRQMRADG (387 aa)) are Extracellular-facing. 9 cysteine pairs are disulfide-bonded: Cys-113/Cys-126, Cys-120/Cys-139, Cys-133/Cys-148, Cys-172/Cys-231, Cys-185/Cys-241, Cys-244/Cys-365, Cys-281/Cys-297, Cys-410/Cys-426, and Cys-437/Cys-465. In terms of domain architecture, LDL-receptor class A spans 118-148 (IECDSSGTCINPSNWCDGVSHCPGGEDENRC). Ca(2+) contacts are provided by Asn-131, Asp-134, Val-136, Asp-144, and Glu-145. The SRCR domain occupies 149 to 242 (VRLYGPNFIL…SKAVVSLRCI (94 aa)). N-linked (GlcNAc...) asparagine glycosylation is found at Asn-213 and Asn-249. The Peptidase S1 domain occupies 256–492 (IVGGESALPG…WIYRQMRADG (237 aa)). Residues His-296 and Asp-345 each act as charge relay system in the active site. Residues 340–470 (KTKNNDIALM…WGSGCAKAYR (131 aa)) are HKU1-CoV S protein-binding. Ser-441 functions as the Charge relay system in the catalytic mechanism.

The protein belongs to the peptidase S1 family. In terms of assembly, the catalytically active form interacts with ACE2. Proteolytically processed; by an autocatalytic mechanism. Autocleavage induces active conformation. In terms of tissue distribution, expressed in several tissues that comprise large populations of epithelial cells with the highest level of transcripts measured in the prostate gland. Expressed in type II pneumocytes in the lung (at protein level). Expressed strongly in small intestine. Also expressed in colon, stomach and salivary gland. Coexpressed with ACE2 within lung type II pneumocytes, ileal absorptive enterocytes, intestinal epithelial cells, cornea, gallbladder and nasal goblet secretory cells.

It localises to the cell membrane. The protein resides in the secreted. The catalysed reaction is The enzyme cleaves angiotensin-converting enzyme 2 (EC 3.4.17.23) and cleaves influenzea A and B virus and coronavirus spike glycoproteins at arginine residues.. In terms of biological role, plasma membrane-anchored serine protease that cleaves at arginine residues. Participates in proteolytic cascades of relevance for the normal physiologic function of the prostate. Androgen-induced TMPRSS2 activates several substrates that include pro-hepatocyte growth factor/HGF, the protease activated receptor-2/F2RL1 or matriptase/ST14 leading to extracellular matrix disruption and metastasis of prostate cancer cells. In addition, activates trigeminal neurons and contribute to both spontaneous pain and mechanical allodynia. (Microbial infection) Facilitates human coronaviruses SARS-CoV and SARS-CoV-2 infections via two independent mechanisms, proteolytic cleavage of ACE2 receptor which promotes viral uptake, and cleavage of coronavirus spike glycoproteins which activates the glycoprotein for host cell entry. The cleavage of SARS-COV2 spike glycoprotein occurs between the S2 and S2' site. Upon SARS-CoV-2 infection, increases syncytia formation by accelerating the fusion process. Proteolytically cleaves and activates the spike glycoproteins of human coronavirus 229E (HCoV-229E) and human coronavirus EMC (HCoV-EMC) and the fusion glycoproteins F0 of Sendai virus (SeV), human metapneumovirus (HMPV), human parainfluenza 1, 2, 3, 4a and 4b viruses (HPIV). Essential for spread and pathogenesis of influenza A virus (strains H1N1, H3N2 and H7N9); involved in proteolytic cleavage and activation of hemagglutinin (HA) protein which is essential for viral infectivity. Functionally, (Microbial infection) Receptor for human coronavirus HKU1-CoV, acts synergistically with disialoside glycans to facilitate the entry of the virus. After binding to cell-surface disialoside glycans, the viral S protein interacts with the inactive form of TMPRSS2 and inhibits its protease activity. This Homo sapiens (Human) protein is Transmembrane protease serine 2.